Consider the following 374-residue polypeptide: Mannitol-1-phosphate 5-dehydrogenase (374 aa).

Residue 3-14 (AIHFGAGNIGRG) participates in NAD(+) binding.

Belongs to the mannitol dehydrogenase family.

It catalyses the reaction D-mannitol 1-phosphate + NAD(+) = beta-D-fructose 6-phosphate + NADH + H(+). The chain is Mannitol-1-phosphate 5-dehydrogenase from Halalkalibacterium halodurans (strain ATCC BAA-125 / DSM 18197 / FERM 7344 / JCM 9153 / C-125) (Bacillus halodurans).